Consider the following 223-residue polypeptide: NADH-quinone oxidoreductase subunit C (223 aa).

Belongs to the complex I 30 kDa subunit family. NDH-1 is composed of 14 different subunits. Subunits NuoB, C, D, E, F, and G constitute the peripheral sector of the complex.

The protein localises to the cell inner membrane. The catalysed reaction is a quinone + NADH + 5 H(+)(in) = a quinol + NAD(+) + 4 H(+)(out). NDH-1 shuttles electrons from NADH, via FMN and iron-sulfur (Fe-S) centers, to quinones in the respiratory chain. The immediate electron acceptor for the enzyme in this species is believed to be ubiquinone. Couples the redox reaction to proton translocation (for every two electrons transferred, four hydrogen ions are translocated across the cytoplasmic membrane), and thus conserves the redox energy in a proton gradient. In Hydrogenovibrio crunogenus (strain DSM 25203 / XCL-2) (Thiomicrospira crunogena), this protein is NADH-quinone oxidoreductase subunit C.